Reading from the N-terminus, the 173-residue chain is Orotate phosphoribosyltransferase (173 aa).

5-phospho-alpha-D-ribose 1-diphosphate contacts are provided by residues Arg87, Lys88, Lys91, and 113-121; that span reads EDIATTGQS. Orotate contacts are provided by Thr117 and Arg145.

Belongs to the purine/pyrimidine phosphoribosyltransferase family. PyrE subfamily. As to quaternary structure, homodimer. Mg(2+) serves as cofactor.

The catalysed reaction is orotidine 5'-phosphate + diphosphate = orotate + 5-phospho-alpha-D-ribose 1-diphosphate. Its pathway is pyrimidine metabolism; UMP biosynthesis via de novo pathway; UMP from orotate: step 1/2. Functionally, catalyzes the transfer of a ribosyl phosphate group from 5-phosphoribose 1-diphosphate to orotate, leading to the formation of orotidine monophosphate (OMP). In Natronomonas pharaonis (strain ATCC 35678 / DSM 2160 / CIP 103997 / JCM 8858 / NBRC 14720 / NCIMB 2260 / Gabara) (Halobacterium pharaonis), this protein is Orotate phosphoribosyltransferase.